Here is a 638-residue protein sequence, read N- to C-terminus: LIM domain kinase 2 (638 aa).

LIM zinc-binding domains are found at residues 12–63 (CRGC…CHKD) and 72–124 (CHGC…CGKC). The PDZ domain maps to 152–239 (LISMPATTEC…TLQLLIEHDP (88 aa)). At threonine 210 the chain carries Phosphothreonine. The interval 255-304 (PHMQSTGHTLMLSTLDTKENQEGTLRRRSLRRSNSISKSPGPSSPKEPLL) is disordered. A compositionally biased stretch (polar residues) spans 257 to 269 (MQSTGHTLMLSTL). The segment covering 270–279 (DTKENQEGTL) has biased composition (basic and acidic residues). Low complexity predominate over residues 286–304 (RSNSISKSPGPSSPKEPLL). Phosphoserine occurs at positions 293 and 298. Residues 331–608 (LIHGEVLGKG…DSFEALSLFL (278 aa)) form the Protein kinase domain. ATP contacts are provided by residues 337–345 (LGKGFFGQA) and lysine 360. Residue aspartate 451 is part of the active site. At threonine 505 the chain carries Phosphothreonine; by ROCK1 and CDC42BP.

Belongs to the protein kinase superfamily. TKL Ser/Thr protein kinase family. In terms of assembly, binds ROCK1 and MARF1. Interacts with NISCH. Post-translationally, phosphorylated on serine and/or threonine residues by ROCK1. As to expression, specifically expressed in the testes.

The protein resides in the cytoplasm. It localises to the cytoskeleton. The protein localises to the spindle. Its subcellular location is the microtubule organizing center. It is found in the centrosome. The protein resides in the nucleus. It localises to the perinuclear region. The catalysed reaction is L-seryl-[protein] + ATP = O-phospho-L-seryl-[protein] + ADP + H(+). It carries out the reaction L-threonyl-[protein] + ATP = O-phospho-L-threonyl-[protein] + ADP + H(+). Functionally, serine/threonine-protein kinase that plays an essential role in the regulation of actin filament dynamics. Acts downstream of several Rho family GTPase signal transduction pathways. Involved in astral microtubule organization and mitotic spindle orientation during early stages of mitosis by mediating phosphorylation of TPPP. Displays serine/threonine-specific phosphorylation of myelin basic protein and histone (MBP) in vitro. Suppresses ciliogenesis via multiple pathways; phosphorylation of CFL1, suppression of directional trafficking of ciliary vesicles to the ciliary base, and by facilitating YAP1 nuclear localization where it acts as a transcriptional corepressor of the TEAD4 target genes AURKA and PLK1. This is LIM domain kinase 2 (Limk2) from Mus musculus (Mouse).